Consider the following 148-residue polypeptide: UPF0260 protein YPK_2117 (148 aa).

Belongs to the UPF0260 family.

The protein is UPF0260 protein YPK_2117 of Yersinia pseudotuberculosis serotype O:3 (strain YPIII).